The sequence spans 153 residues: Endoribonuclease YbeY (153 aa).

Zn(2+)-binding residues include histidine 118, histidine 122, and histidine 128.

This sequence belongs to the endoribonuclease YbeY family. It depends on Zn(2+) as a cofactor.

Its subcellular location is the cytoplasm. In terms of biological role, single strand-specific metallo-endoribonuclease involved in late-stage 70S ribosome quality control and in maturation of the 3' terminus of the 16S rRNA. The polypeptide is Endoribonuclease YbeY (Clostridioides difficile (strain 630) (Peptoclostridium difficile)).